Here is a 72-residue protein sequence, read N- to C-terminus: Translation initiation factor IF-1 2 (72 aa).

In terms of domain architecture, S1-like spans 1 to 72 (MSKDDVIEVE…TRGRIVYRYK (72 aa)).

It belongs to the IF-1 family. In terms of assembly, component of the 30S ribosomal translation pre-initiation complex which assembles on the 30S ribosome in the order IF-2 and IF-3, IF-1 and N-formylmethionyl-tRNA(fMet); mRNA recruitment can occur at any time during PIC assembly.

The protein localises to the cytoplasm. Its function is as follows. One of the essential components for the initiation of protein synthesis. Stabilizes the binding of IF-2 and IF-3 on the 30S subunit to which N-formylmethionyl-tRNA(fMet) subsequently binds. Helps modulate mRNA selection, yielding the 30S pre-initiation complex (PIC). Upon addition of the 50S ribosomal subunit IF-1, IF-2 and IF-3 are released leaving the mature 70S translation initiation complex. The protein is Translation initiation factor IF-1 2 of Symbiobacterium thermophilum (strain DSM 24528 / JCM 14929 / IAM 14863 / T).